A 207-amino-acid polypeptide reads, in one-letter code: 5-amino-6-(5-phosphoribosylamino)uracil reductase (207 aa).

Position 6 (S6) interacts with substrate. W8 lines the NADP(+) pocket. R22 contributes to the substrate binding site. D38 is a binding site for NADP(+). Substrate contacts are provided by L42 and R45. Position 72 (S72) interacts with NADP(+). E137 contributes to the substrate binding site.

This sequence belongs to the HTP reductase family.

The enzyme catalyses 5-amino-6-(5-phospho-D-ribitylamino)uracil + NADP(+) = 5-amino-6-(5-phospho-D-ribosylamino)uracil + NADPH + H(+). The protein operates within cofactor biosynthesis; riboflavin biosynthesis; 5-amino-6-(D-ribitylamino)uracil from GTP: step 3/4. The polypeptide is 5-amino-6-(5-phosphoribosylamino)uracil reductase (ribD2) (Buchnera aphidicola subsp. Acyrthosiphon pisum (strain APS) (Acyrthosiphon pisum symbiotic bacterium)).